Reading from the N-terminus, the 248-residue chain is Large ribosomal subunit protein uL10m (248 aa).

A mitochondrion-targeting transit peptide spans M1–F24.

This sequence belongs to the universal ribosomal protein uL10 family. In terms of assembly, component of the mitochondrial ribosome large subunit (39S) which comprises a 16S rRNA and about 50 distinct proteins.

It is found in the mitochondrion. The protein is Large ribosomal subunit protein uL10m (mRpL10) of Drosophila melanogaster (Fruit fly).